The following is a 361-amino-acid chain: Phosphoserine aminotransferase (361 aa).

L-glutamate is bound at residue Arg42. Residues 76–77 (AT), Trp102, Thr152, Asp172, and Gln195 contribute to the pyridoxal 5'-phosphate site. Lys196 is modified (N6-(pyridoxal phosphate)lysine). Residue 237 to 238 (NT) participates in pyridoxal 5'-phosphate binding.

The protein belongs to the class-V pyridoxal-phosphate-dependent aminotransferase family. SerC subfamily. Homodimer. Requires pyridoxal 5'-phosphate as cofactor.

Its subcellular location is the cytoplasm. It carries out the reaction O-phospho-L-serine + 2-oxoglutarate = 3-phosphooxypyruvate + L-glutamate. It catalyses the reaction 4-(phosphooxy)-L-threonine + 2-oxoglutarate = (R)-3-hydroxy-2-oxo-4-phosphooxybutanoate + L-glutamate. It functions in the pathway amino-acid biosynthesis; L-serine biosynthesis; L-serine from 3-phospho-D-glycerate: step 2/3. The protein operates within cofactor biosynthesis; pyridoxine 5'-phosphate biosynthesis; pyridoxine 5'-phosphate from D-erythrose 4-phosphate: step 3/5. Catalyzes the reversible conversion of 3-phosphohydroxypyruvate to phosphoserine and of 3-hydroxy-2-oxo-4-phosphonooxybutanoate to phosphohydroxythreonine. This is Phosphoserine aminotransferase from Stenotrophomonas maltophilia (strain R551-3).